Reading from the N-terminus, the 365-residue chain is Endophilin-B1 (365 aa).

Residue methionine 1 is modified to N-acetylmethionine. A membrane-binding amphipathic helix region spans residues 1 to 30 (MNIMDFNVKKLAADAGTFLSRAVQFTEEKL). The interval 1-37 (MNIMDFNVKKLAADAGTFLSRAVQFTEEKLGQAEKTE) is required for membrane binding. Residues 27-261 (EEKLGQAEKT…LGSFPSNYLS (235 aa)) enclose the BAR domain. Residue threonine 145 is modified to Phosphothreonine; by CDK5. Residues 155–195 (YKTIAKERKLLQNKRLDLDAAKTRLKKAKAAETRNSSEQEL) are a coiled coil. Residues 305–365 (SGSRKARVLY…VPITYLELLN (61 aa)) form the SH3 domain.

Belongs to the endophilin family. Homodimer, and heterodimer with SH3GLB2. Binds BAX; induction of apoptosis augments BAX binding. Binds DNM1, HTT, AMPH, BIN1 and ARFGAP1. Interacts with UVRAG; UVRAG bridges the interaction to BECN1 indicative for an association with the PI3K complex II (PI3KC3-C2). Post-translationally, phosphorylated at Thr-145 by CDK5; this phosphorylation is required for autophagy induction in starved neurons and facilitates homodimerization. As to expression, highly expressed in heart, skeletal muscle, kidney and placenta. Detected at lower levels in brain, colon, thymus, spleen, liver, small intestine, lung and peripheral blood leukocytes.

It localises to the cytoplasm. Its subcellular location is the golgi apparatus membrane. The protein localises to the mitochondrion outer membrane. It is found in the cytoplasmic vesicle. The protein resides in the autophagosome membrane. It localises to the midbody. May be required for normal outer mitochondrial membrane dynamics. Required for coatomer-mediated retrograde transport in certain cells. May recruit other proteins to membranes with high curvature. May promote membrane fusion. Involved in activation of caspase-dependent apoptosis by promoting BAX/BAK1 activation. Isoform 1 acts proapoptotic in fibroblasts. Involved in caspase-independent apoptosis during nutrition starvation and involved in the regulation of autophagy. Activates lipid kinase activity of PIK3C3 during autophagy probably by associating with the PI3K complex II (PI3KC3-C2). Associated with PI3KC3-C2 during autophagy may regulate the trafficking of ATG9A from the Golgi complex to the peripheral cytoplasm for the formation of autophagosomes by inducing Golgi membrane tubulation and fragmentation. Involved in regulation of degradative endocytic trafficking and cytokinesis, probably in the context of PI3KC3-C2. Isoform 2 acts antiapoptotic in neuronal cells; involved in maintenance of mitochondrial morphology and promotes neuronal viability. This is Endophilin-B1 (SH3GLB1) from Homo sapiens (Human).